A 180-amino-acid polypeptide reads, in one-letter code: NAD(P)H-quinone oxidoreductase subunit I, chloroplastic (180 aa).

4Fe-4S ferredoxin-type domains lie at 55 to 84 and 95 to 124; these read GRIH…VDWR and LNYS…MTEE. Residues cysteine 64, cysteine 67, cysteine 70, cysteine 74, cysteine 104, cysteine 107, cysteine 110, and cysteine 114 each coordinate [4Fe-4S] cluster.

This sequence belongs to the complex I 23 kDa subunit family. As to quaternary structure, NDH is composed of at least 16 different subunits, 5 of which are encoded in the nucleus. [4Fe-4S] cluster serves as cofactor.

The protein localises to the plastid. It is found in the chloroplast thylakoid membrane. It carries out the reaction a plastoquinone + NADH + (n+1) H(+)(in) = a plastoquinol + NAD(+) + n H(+)(out). The catalysed reaction is a plastoquinone + NADPH + (n+1) H(+)(in) = a plastoquinol + NADP(+) + n H(+)(out). Its function is as follows. NDH shuttles electrons from NAD(P)H:plastoquinone, via FMN and iron-sulfur (Fe-S) centers, to quinones in the photosynthetic chain and possibly in a chloroplast respiratory chain. The immediate electron acceptor for the enzyme in this species is believed to be plastoquinone. Couples the redox reaction to proton translocation, and thus conserves the redox energy in a proton gradient. The sequence is that of NAD(P)H-quinone oxidoreductase subunit I, chloroplastic from Oryza nivara (Indian wild rice).